Reading from the N-terminus, the 211-residue chain is Ribonuclease T (211 aa).

One can recognise an Exonuclease domain in the interval 24–198 (VVVDVETGGF…YDAEKTAHLF (175 aa)). Aspartate 27, glutamate 29, histidine 185, and aspartate 190 together coordinate Mg(2+). Histidine 185 functions as the Proton donor/acceptor in the catalytic mechanism.

Belongs to the RNase T family. As to quaternary structure, homodimer. Mg(2+) is required as a cofactor.

Its function is as follows. Trims short 3' overhangs of a variety of RNA species, leaving a one or two nucleotide 3' overhang. Responsible for the end-turnover of tRNA: specifically removes the terminal AMP residue from uncharged tRNA (tRNA-C-C-A). Also appears to be involved in tRNA biosynthesis. The polypeptide is Ribonuclease T (Xylella fastidiosa (strain 9a5c)).